Here is an 899-residue protein sequence, read N- to C-terminus: Proline-rich transmembrane protein 4 (899 aa).

The first 23 residues, 1-23 (MARHGCLGLGLFCCVLFAATVGP), serve as a signal peptide directing secretion. Disordered regions lie at residues 110-152 (LTEW…RRST) and 295-340 (TVPI…PEAP). Helical transmembrane passes span 370-390 (VGAL…LLPW), 392-412 (CPPG…AGTT), 430-450 (ALAW…GLGL), 467-487 (LAAL…GSAA), and 500-520 (GLHA…SCWG). The residue at position 641 (S641) is a Phosphoserine. 2 disordered regions span residues 769 to 797 (TGGR…AWPA) and 839 to 869 (PSGS…ASEL). Residues 840 to 851 (SGSSPSLPASGS) show a composition bias toward low complexity.

It is found in the membrane. This Homo sapiens (Human) protein is Proline-rich transmembrane protein 4 (PRRT4).